Reading from the N-terminus, the 2171-residue chain is MANLGGGAEAHARFKQYEYRANSSLVLTTDNRPRDTHEPTGEPETLWGKIDPRSFGDRVAKGRPQELEDKLKKSKKKERDVVDDMVNIRQSKRRRLREESVLTDTDDAVYQPKTKETRAAYEAMLGLIQKQLGGQPPSIVSGAADEILAVLKNDAFRNPEKKMEIEKLLNKIENHEFDQLVSIGKLITDFQEGGDSGGGRANDDEGLDDDLGVAVEFEENEEDDEESDPDMVEEDDDEEDDEPTRTGGMQVDAGINDEDAGDANEGTNLNVQDIDAYWLQRKISQAYEQQIDPQQCQVLAEELLKILAEGDDRVVEDKLLMHLQYEKFSLVKFLLRNRLKVVWCTRLARAEDQEERNRIEEEMRGLGPELTAIVEQLHATRATAKEREENLQKSINEEARRLKDETGGDGGRGRRDVADRDSESGWVKGQRQMLDLESLAFDQGGLLMANKKCDLPPGSYRSHGKGYDEVHVPWVSKKVDRNEKLVKITEMPDWAQPAFKGMQQLNRVQSKVYDTALFKAENILLCAPTGAGKTNVAMLTILQQLEMNRNTDGTYNHGDYKIVYVAPMKALVAEVVGNLSNRLKDYGVIVRELSGDQSLTGREIEETQIIVTTPEKWDIITRKSGDRTYTQLVRLLIIDEIHLLHDNRGPVLESIVARTLRQIETTKENIRLVGLSATLPNYEDVALFLRVDLKKGLFKFDRSYRPVPLHQQYIGISVKKPLQRFQLMNDLCYQKVLAGAGKHQVLIFVHSRKETSKTARAIRDTAMANDTLSRFLKEDSVTRDVLHSHEDIVKNSDLKDILPYGFAIHHAGLSRGDREIVETLFSQGHVQVLVSTATLAWGVNLPAHTVIIKGTQVYNPEKGAWMELSPLDVMQMLGRAGRPQYDQHGEGIIITGYSELQYYLSLMNEQLPIESQFISKLADQLNAEIVLGTVQNAREACHWLGYTYLYIRMVRNPTLYGLAPDALAKDVVLEERRADLIHSAATILDKNNLVKYDRKSGYFQVTDLGRIASYYYITHGTIATYNEHLKPTMGDIDLYRLFSLSDEFKYVTVRQDEKMELAKLLDRVPIPIKETLEEPSAKINVLLQAYISQLKLEGLSLTSDMVYITQSAGRLVRALYEIVLKRGWAQLAEKALNLSKMVGKRMWSVQTPLRQFHGLSNDILMQLEKKDLVWERYYDLSAQELGELIRSPKMGKPLHKFIHQFPKVTLSAHVQPITRTVLNVELTVTPDFLWDEKIHKYVEPFWIIVEDNDGEKILHHEYFLLKKQYIDEDHTLHFTVPIFEPLPPQYFVRVVSDKWLGSETVLPVSFRHLILPEKYPPPTELLDLQPLPVTALRNPNYEILYQDFKHFNPVQTQVFTVLYNTNDNVLVAAPTGSGKTICAEFAILRNHHEGPDATMRVVYIAPLEAIAKEQFRIWEGKFGKGLGLRVVELTGETALDLKLLEKGQIIISTPEKWDALSRRWKQRKYVQQVSLFIVDELHLIGGQHGPVLEVIVSRMRYISSQVINKIRIVALSTSLANAKDLGEWIGASSHGLFNFPPGVRPVPLEIHIQGVDISSFEARMQAMTKPTYTAIVQHAKNKKPAIVFVPTRKHVRLTAVDLMAYSHMDNPQSPDFLLGKLEELDPFVEQIREETLKETLCHGIGYLHEGLSSLDQEIVTQLFEAGRIQVCVMSSSLCWGTPLTAHLVVVMGTQYYDGRENSHSDYPVPDLLQMMGRASRPLLDNAGKCVIFCHAPRKEYYKKFLYEAFPVESQLQHFLHDNFNAEVVAGVIENKQDAVDYLTWTFMYRRLPQNPNYYNLQGVSHRHLSDHLSELVENTLSDLEASKCIEVEDEMELSPLNLGMIASYYYISYTTIERFSSLLSSKTKMKGLLEILTSASEYDMIPIRPGEEDTVRRLINHQRFSFENPKCTDPHVKANALLQAHFSRQNIGGNLAMDQRDVLLSATRLLQAMVDVISSNGWLNLALLAMEVSQMVTQGMWERDSMLLQLPHFTKDLAKRCQENPGKNIETVFDLVEMEDEERQELLKMSDAQLLDIARFCNRFPNIDLTYEIVGSEEVNPGKEVTLQVMLERDMEGRTEVGPVDSLRYPKTKEEGWWLVVGDTKTNQLLAIKRVSLQRKVKVKLDFTAPSEPGEKSYTLYFMCDSYLGCDQEYSFSVDVKGSGAGDRMEE.

3 disordered regions span residues 24-80 (SLVL…KERD), 218-267 (EENE…NEGT), and 383-426 (TAKE…ESGW). Composition is skewed to basic and acidic residues over residues 31-40 (NRPRDTHEPT) and 50-80 (IDPRSFGDRVAKGRPQELEDKLKKSKKKERD). Positions 218–242 (EENEEDDEESDPDMVEEDDDEEDDE) are enriched in acidic residues. Basic and acidic residues predominate over residues 383-423 (TAKEREENLQKSINEEARRLKDETGGDGGRGRRDVADRDSE). Residues 514 to 697 (DTALFKAENI…FLRVDLKKGL (184 aa)) enclose the Helicase ATP-binding 1 domain. An ATP-binding site is contributed by 527–534 (APTGAGKT). Residues 639 to 642 (DEIH) carry the DEIH box motif. One can recognise a Helicase C-terminal 1 domain in the interval 731 to 941 (LCYQKVLAGA…GTVQNAREAC (211 aa)). The SEC63 1 domain occupies 1006 to 1308 (TDLGRIASYY…WLGSETVLPV (303 aa)). The Helicase ATP-binding 2 domain maps to 1360–1537 (TVLYNTNDNV…WIGASSHGLF (178 aa)). 1373-1380 (APTGSGKT) contacts ATP. Residues 1479–1482 (DELH) carry the DELH box motif. The 206-residue stretch at 1574 to 1779 (AIVQHAKNKK…GVIENKQDAV (206 aa)) folds into the Helicase C-terminal 2 domain. The region spanning 1839–2157 (PLNLGMIASY…LGCDQEYSFS (319 aa)) is the SEC63 2 domain.

It belongs to the DExH box helicase family. In terms of assembly, interacts with CLO.

The protein localises to the nucleus. It carries out the reaction ATP + H2O = ADP + phosphate + H(+). Its function is as follows. RNA helicase that plays an essential role in pre-mRNA splicing as component of the U5 snRNP and U4/U6-U5 tri-snRNP complexes. Involved in spliceosome assembly, activation and disassembly. The protein is DExH-box ATP-dependent RNA helicase DExH12 of Arabidopsis thaliana (Mouse-ear cress).